Here is a 188-residue protein sequence, read N- to C-terminus: A-type ATP synthase subunit E (188 aa).

The protein belongs to the V-ATPase E subunit family. As to quaternary structure, has multiple subunits with at least A(3), B(3), C, D, E, F, H, I and proteolipid K(x).

It localises to the cell membrane. Its function is as follows. Component of the A-type ATP synthase that produces ATP from ADP in the presence of a proton gradient across the membrane. The polypeptide is A-type ATP synthase subunit E (Archaeoglobus fulgidus (strain ATCC 49558 / DSM 4304 / JCM 9628 / NBRC 100126 / VC-16)).